A 161-amino-acid polypeptide reads, in one-letter code: Cytochrome c-type biogenesis protein CcmE (161 aa).

Topologically, residues methionine 1–arginine 8 are cytoplasmic. The chain crosses the membrane as a helical; Signal-anchor for type II membrane protein span at residues leucine 9 to alanine 29. The Periplasmic portion of the chain corresponds to leucine 30 to tyrosine 161. Positions 131 and 135 each coordinate heme.

The protein belongs to the CcmE/CycJ family.

Its subcellular location is the cell inner membrane. Heme chaperone required for the biogenesis of c-type cytochromes. Transiently binds heme delivered by CcmC and transfers the heme to apo-cytochromes in a process facilitated by CcmF and CcmH. In Shewanella loihica (strain ATCC BAA-1088 / PV-4), this protein is Cytochrome c-type biogenesis protein CcmE.